Here is a 272-residue protein sequence, read N- to C-terminus: Orotidine 5'-phosphate decarboxylase (272 aa).

Lys-92 serves as the catalytic Proton donor.

Belongs to the OMP decarboxylase family. Type 2 subfamily.

It catalyses the reaction orotidine 5'-phosphate + H(+) = UMP + CO2. The protein operates within pyrimidine metabolism; UMP biosynthesis via de novo pathway; UMP from orotate: step 2/2. The polypeptide is Orotidine 5'-phosphate decarboxylase (pyrF) (Deinococcus radiodurans (strain ATCC 13939 / DSM 20539 / JCM 16871 / CCUG 27074 / LMG 4051 / NBRC 15346 / NCIMB 9279 / VKM B-1422 / R1)).